The primary structure comprises 305 residues: Dermonecrotic toxin LiSicTox-alphaIA2aiii (305 aa).

A signal peptide spans 1–17 (LPYIALILVCWSVLSQA). Residues 18 to 25 (AQTDVEER) constitute a propeptide that is removed on maturation. Residue H37 is part of the active site. The Mg(2+) site is built by E57 and D59. The active-site Nucleophile is H73. 2 cysteine pairs are disulfide-bonded: C77–C83 and C79–C222. A Mg(2+)-binding site is contributed by D117. Residue N282 is glycosylated (N-linked (GlcNAc...) asparagine).

It belongs to the arthropod phospholipase D family. Class II subfamily. Mg(2+) serves as cofactor. Expressed by the venom gland.

The protein resides in the secreted. The catalysed reaction is an N-(acyl)-sphingosylphosphocholine = an N-(acyl)-sphingosyl-1,3-cyclic phosphate + choline. It carries out the reaction an N-(acyl)-sphingosylphosphoethanolamine = an N-(acyl)-sphingosyl-1,3-cyclic phosphate + ethanolamine. It catalyses the reaction a 1-acyl-sn-glycero-3-phosphocholine = a 1-acyl-sn-glycero-2,3-cyclic phosphate + choline. The enzyme catalyses a 1-acyl-sn-glycero-3-phosphoethanolamine = a 1-acyl-sn-glycero-2,3-cyclic phosphate + ethanolamine. In terms of biological role, dermonecrotic toxins cleave the phosphodiester linkage between the phosphate and headgroup of certain phospholipids (sphingolipid and lysolipid substrates), forming an alcohol (often choline) and a cyclic phosphate. This toxin acts on sphingomyelin (SM). It may also act on ceramide phosphoethanolamine (CPE), lysophosphatidylcholine (LPC) and lysophosphatidylethanolamine (LPE), but not on lysophosphatidylserine (LPS), and lysophosphatidylglycerol (LPG). It acts by transphosphatidylation, releasing exclusively cyclic phosphate products as second products. Induces dermonecrosis, hemolysis, increased vascular permeability, edema, inflammatory response, and platelet aggregation. The protein is Dermonecrotic toxin LiSicTox-alphaIA2aiii of Loxosceles intermedia (Brown spider).